A 333-amino-acid chain; its full sequence is Protoheme IX farnesyltransferase (333 aa).

The next 8 helical transmembrane spans lie at 31–51, 52–72, 115–135, 152–172, 178–198, 223–243, 244–264, and 303–323; these read VMSL…APIH, PVLA…SGAL, MFLG…TIVF, IVIG…AATG, AWLM…ALSL, KQIL…VLTG, LGGP…LLLA, and LFAF…GEAV.

This sequence belongs to the UbiA prenyltransferase family. Protoheme IX farnesyltransferase subfamily.

It localises to the cell inner membrane. The enzyme catalyses heme b + (2E,6E)-farnesyl diphosphate + H2O = Fe(II)-heme o + diphosphate. It functions in the pathway porphyrin-containing compound metabolism; heme O biosynthesis; heme O from protoheme: step 1/1. In terms of biological role, converts heme B (protoheme IX) to heme O by substitution of the vinyl group on carbon 2 of heme B porphyrin ring with a hydroxyethyl farnesyl side group. This chain is Protoheme IX farnesyltransferase, found in Caulobacter vibrioides (strain ATCC 19089 / CIP 103742 / CB 15) (Caulobacter crescentus).